Reading from the N-terminus, the 326-residue chain is Amino acid--[acyl-carrier-protein] ligase 1 (326 aa).

Residue cysteine 131 participates in Zn(2+) binding. ATP contacts are provided by residues arginine 159, glutamate 161, and arginine 168–leucine 169. Zn(2+) is bound at residue glutamate 176. Glutamate 176 contributes to the an L-alpha-amino acid binding site. ATP contacts are provided by residues lysine 235 and alanine 250–serine 253. Position 279 (cysteine 279) interacts with Zn(2+). Residue arginine 286 participates in ATP binding.

Belongs to the class-II aminoacyl-tRNA synthetase family. Amino acid--[acyl-carrier-protein] ligase subfamily. In terms of assembly, homodimer. Requires Zn(2+) as cofactor.

It carries out the reaction an L-alpha-amino acid + holo-[ACP] + ATP = an L-alpha-aminoacyl-[ACP] + AMP + diphosphate. Functionally, catalyzes the ATP-dependent activation of L-glycine and its transfer to the phosphopantetheine prosthetic group covalently attached to the vicinal carrier protein bsr0959 of yet unknown function. May participate in nonribosomal peptide synthesis or related processes. L-alanine is a poor substrate whereas L-serine or D-amino acids are not substrates for ATP-dependent activation. Does not display tRNA aminoacylation activity. This Bradyrhizobium diazoefficiens (strain JCM 10833 / BCRC 13528 / IAM 13628 / NBRC 14792 / USDA 110) protein is Amino acid--[acyl-carrier-protein] ligase 1.